Consider the following 1507-residue polypeptide: DDB1- and CUL4-associated factor 1 (1507 aa).

Residues 141–500 form a protein kinase-like region; sequence QPLRTYSTGL…STLEILNLED (360 aa). A phosphoserine mark is found at Ser-202 and Ser-255. The interval 242–288 is disordered; sequence HLDSGHKTSSRVNSTTKPEDGGLKKNKSAKQGDRENFRKAKQKLGFS. Residues 562–593 form the Chromo domain; it reads SYTHEQIVEMMEFLIEYGPAQLYWEPAEVFLK. Lys-701 is modified (N6-acetyllysine). Ser-828 bears the Phosphoserine mark. The 33-residue stretch at 846–878 folds into the LisH domain; it reads PEKELLLLIRNHLISKGLGETATVLTKEADLPM. Thr-888 bears the Phosphothreonine mark. Phosphoserine occurs at positions 895 and 898. The tract at residues 917–947 is disordered; the sequence is AAVGASAPSAPTAHPQPRPPQGPLALPGPSY. 2 positions are modified to phosphoserine: Ser-979 and Ser-1000. WD repeat units lie at residues 1091 to 1130, 1133 to 1174, 1176 to 1213, 1215 to 1247, and 1248 to 1290; these read EDES…EEAS, CHNS…DMKH, FTED…KLLT, FNPD…WDVR, and SAQA…LLHT. The segment at 1091-1290 is WD repeat-like region; the sequence is EDESGFTCCA…DLRTFHLLHT (200 aa). 2 short sequence motifs (DWD box) span residues 1242 to 1249 and 1278 to 1285; these read VLWDVRSA and EIWDLRTF. Ser-1328 is subject to Phosphoserine. Positions 1393-1507 are disordered; sequence RLAEDEDEEE…EDDIILSLNE (115 aa). Composition is skewed to acidic residues over residues 1396–1483 and 1490–1501; these read EDED…EEVE and DSSDNSDLEDDI. The interaction with NF2 stretch occupies residues 1418 to 1507; it reads DDDTDDLDEL…EDDIILSLNE (90 aa).

The protein belongs to the VPRBP/DCAF1 family. As to quaternary structure, component of the DCX (DDB1-CUL4-X-box) E3 ubiquitin-protein ligase complex, named CUL4A-RBX1-DDB1-DCAF1/VPRBP complex. Interacts with DDB1; the interaction is direct. Also forms a ternary complex with DDA1 and DDB1. Interacts with NF2 (via FERM domain). Component of the EDVP complex, a E3 ligase complex containing DYRK2, EDD/UBR5, DDB1 and DCAF1. Interacts with DYRK2; the interaction is direct. Interacts with RAG1; the interaction is direct. Interacts with LLGL1 and LLGL2. Interacts with histone H3. Interacts with ESR1 and LATS1; probably recruited by LATS1 to promote ESR1 ubiquitination and ubiquitin-mediated proteasomal degradation. Directly interacts with TET1, TET2 and TET3 (via C-terminus). Interacts with CEP78; promoting DCAF1 localization to centrosomes. In terms of assembly, (Microbial infection) Interacts with HIV-1 virus Vpr protein; the interaction is direct. (Microbial infection) Interacts with HIV-2 virus Vpx protein; the interaction is direct and the complex recruits SAMHD1 to promote its ubiquitin-dependent proteasomal degradation. As to quaternary structure, (Microbial infection) Interacts (via C-terminus) with human cytomegalovirus protein UL35; this interaction induces the accumulation of cells in the G2 phase of the cell cycle. As to expression, ubiquitously expressed.

The protein localises to the cytoplasm. It localises to the nucleus. Its subcellular location is the cytoskeleton. It is found in the microtubule organizing center. The protein resides in the centrosome. The enzyme catalyses L-seryl-[protein] + ATP = O-phospho-L-seryl-[protein] + ADP + H(+). It carries out the reaction L-threonyl-[protein] + ATP = O-phospho-L-threonyl-[protein] + ADP + H(+). The protein operates within protein modification; protein ubiquitination. In terms of biological role, acts both as a substrate recognition component of E3 ubiquitin-protein ligase complexes and as an atypical serine/threonine-protein kinase, playing key roles in various processes such as cell cycle, telomerase regulation and histone modification. Probable substrate-specific adapter of a DCX (DDB1-CUL4-X-box) E3 ubiquitin-protein ligase complex, named CUL4A-RBX1-DDB1-DCAF1/VPRBP complex, which mediates ubiquitination and proteasome-dependent degradation of proteins such as NF2. Involved in the turnover of methylated proteins: recognizes and binds methylated proteins via its chromo domain, leading to ubiquitination of target proteins by the RBX1-DDB1-DCAF1/VPRBP complex. The CUL4A-RBX1-DDB1-DCAF1/VPRBP complex is also involved in B-cell development: DCAF1 is recruited by RAG1 to ubiquitinate proteins, leading to limit error-prone repair during V(D)J recombination. Also part of the EDVP complex, an E3 ligase complex that mediates ubiquitination of proteins such as TERT, leading to TERT degradation and telomerase inhibition. The EDVP complex also mediates ubiquitination and degradation of CCP110. Also acts as an atypical serine/threonine-protein kinase that specifically mediates phosphorylation of 'Thr-120' of histone H2A (H2AT120ph) in a nucleosomal context, thereby repressing transcription. H2AT120ph is present in the regulatory region of many tumor suppresor genes, down-regulates their transcription and is present at high level in a number of tumors. Involved in JNK-mediated apoptosis during cell competition process via its interaction with LLGL1 and LLGL2. By acting on TET dioxygenses, essential for oocyte maintenance at the primordial follicle stage, hence essential for female fertility. (Microbial infection) In case of infection by HIV-1 virus, it is recruited by HIV-1 Vpr in order to hijack the CUL4A-RBX1-DDB1-DCAF1/VPRBP function leading to arrest the cell cycle in G2 phase, and also to protect the viral protein from proteasomal degradation by another E3 ubiquitin ligase. The HIV-1 Vpr protein hijacks the CUL4A-RBX1-DDB1-DCAF1/VPRBP complex to promote ubiquitination and degradation of proteins such as TERT and ZIP/ZGPAT. Functionally, (Microbial infection) In case of infection by HIV-2 virus, it is recruited by HIV-2 Vpx in order to hijack the CUL4A-RBX1-DDB1-DCAF1/VPRBP function leading to enhanced efficiency of macrophage infection and promotion of the replication of cognate primate lentiviruses in cells of monocyte/macrophage lineage. This Homo sapiens (Human) protein is DDB1- and CUL4-associated factor 1.